We begin with the raw amino-acid sequence, 149 residues long: Transcriptional repressor NrdR (149 aa).

A zinc finger spans residues 3-34 (CPYCSYEESKVVDSRSAEDYNAIRRRRECLRC). The region spanning 49–139 (ILVIKKDLSR…VYRQFKDINT (91 aa)) is the ATP-cone domain.

Belongs to the NrdR family. The cofactor is Zn(2+).

In terms of biological role, negatively regulates transcription of bacterial ribonucleotide reductase nrd genes and operons by binding to NrdR-boxes. The chain is Transcriptional repressor NrdR from Clostridium perfringens (strain ATCC 13124 / DSM 756 / JCM 1290 / NCIMB 6125 / NCTC 8237 / Type A).